A 315-amino-acid chain; its full sequence is Olfactory receptor 51L1 (315 aa).

Topologically, residues 1 to 27 are extracellular; sequence MGDWNNSDAVEPIFILRGFPGLEYVHS. An N-linked (GlcNAc...) asparagine glycan is attached at Asn5. The helical transmembrane segment at 28–48 threads the bilayer; that stretch reads WLSILFCLAYLVAFMGNVTIL. Over 49–56 the chain is Cytoplasmic; that stretch reads SVIWIESS. Residues 57–77 form a helical membrane-spanning segment; sequence LHQPMYYFISILAVNDLGMSL. Topologically, residues 78 to 101 are extracellular; sequence STLPTMLAVLWLDAPEIQASACYA. A disulfide bridge links Cys99 with Cys191. Residues 102–122 traverse the membrane as a helical segment; sequence QLFFIHTFTFLESSVLLAMAF. Residues 123–141 lie on the Cytoplasmic side of the membrane; sequence DRFVAICHPLHYPTILTNS. The chain crosses the membrane as a helical span at residues 142–162; sequence VIGKIGLACLLRSLGVVLPTP. Over 163 to 198 the chain is Extracellular; sequence LLLRHYHYCHGNALSHAFCLHQDVLRLSCTDARTNS. Residues 199 to 219 form a helical membrane-spanning segment; the sequence is IYGLCVVIATLGVDSIFILLS. Topologically, residues 220–239 are cytoplasmic; the sequence is YVLILNTVLDIASREEQLKA. Residues 240-260 form a helical membrane-spanning segment; that stretch reads LNTCVSHICVVLIFFVPVIGV. The Extracellular segment spans residues 261–275; sequence SMVHRFGKHLSPIVH. The helical transmembrane segment at 276-296 threads the bilayer; the sequence is ILMADIYLLLPPVLNPIVYSV. The Cytoplasmic segment spans residues 297–315; the sequence is RTKQIRLGILHKFVLRRRF.

This sequence belongs to the G-protein coupled receptor 1 family.

The protein localises to the cell membrane. In terms of biological role, odorant receptor. The chain is Olfactory receptor 51L1 (OR51L1) from Homo sapiens (Human).